Consider the following 311-residue polypeptide: Heparan sulfate glucosamine 3-O-sulfotransferase 1 (311 aa).

The signal sequence occupies residues 1-20 (MTLLLLGAVLLVAQPQLVHS). N-linked (GlcNAc...) asparagine glycosylation is present at N52. 3'-phosphoadenylyl sulfate contacts are provided by residues 68–72 (KGGTR), R151, and S159. N-linked (GlcNAc...) asparagine glycosylation is found at N196, N246, and N253. Y259 contacts 3'-phosphoadenylyl sulfate. The cysteines at positions 260 and 269 are disulfide-linked. 274–278 (KGRAH) lines the 3'-phosphoadenylyl sulfate pocket.

Belongs to the sulfotransferase 1 family.

It localises to the golgi apparatus lumen. The catalysed reaction is alpha-D-glucosaminyl-[heparan sulfate](n) + 3'-phosphoadenylyl sulfate = 3-sulfo-alpha-D-glucosaminyl-[heparan sulfate](n) + adenosine 3',5'-bisphosphate + H(+). In terms of biological role, sulfotransferase that utilizes 3'-phospho-5'-adenylyl sulfate (PAPS) to catalyze the transfer of a sulfo group to position 3 of glucosamine residues in heparan. Catalyzes the rate limiting step in the biosynthesis of heparan sulfate (HSact). This modification is a crucial step in the biosynthesis of anticoagulant heparan sulfate as it completes the structure of the antithrombin pentasaccharide binding site. The sequence is that of Heparan sulfate glucosamine 3-O-sulfotransferase 1 (Hs3st1) from Mus musculus (Mouse).